The sequence spans 210 residues: Putative truncated L-serine dehydratase SDL1 (210 aa).

The protein belongs to the serine/threonine dehydratase family. Requires pyridoxal 5'-phosphate as cofactor.

Its subcellular location is the cytoplasm. It catalyses the reaction L-serine = pyruvate + NH4(+). The protein operates within carbohydrate biosynthesis; gluconeogenesis. The sequence is that of Putative truncated L-serine dehydratase SDL1 (SDL1) from Saccharomyces cerevisiae (strain ATCC 204508 / S288c) (Baker's yeast).